We begin with the raw amino-acid sequence, 287 residues long: Urease accessory protein UreD (287 aa).

This sequence belongs to the UreD family. As to quaternary structure, ureD, UreF and UreG form a complex that acts as a GTP-hydrolysis-dependent molecular chaperone, activating the urease apoprotein by helping to assemble the nickel containing metallocenter of UreC. The UreE protein probably delivers the nickel.

It is found in the cytoplasm. Its function is as follows. Required for maturation of urease via the functional incorporation of the urease nickel metallocenter. The chain is Urease accessory protein UreD from Aliivibrio fischeri (strain ATCC 700601 / ES114) (Vibrio fischeri).